A 325-amino-acid chain; its full sequence is Tetraacyldisaccharide 4'-kinase (325 aa).

An ATP-binding site is contributed by 54–61 (SVGGTGKT).

Belongs to the LpxK family.

It carries out the reaction a lipid A disaccharide + ATP = a lipid IVA + ADP + H(+). The protein operates within glycolipid biosynthesis; lipid IV(A) biosynthesis; lipid IV(A) from (3R)-3-hydroxytetradecanoyl-[acyl-carrier-protein] and UDP-N-acetyl-alpha-D-glucosamine: step 6/6. Transfers the gamma-phosphate of ATP to the 4'-position of a tetraacyldisaccharide 1-phosphate intermediate (termed DS-1-P) to form tetraacyldisaccharide 1,4'-bis-phosphate (lipid IVA). The sequence is that of Tetraacyldisaccharide 4'-kinase from Rickettsia felis (strain ATCC VR-1525 / URRWXCal2) (Rickettsia azadi).